The following is a 436-amino-acid chain: 3-ketoacyl-CoA thiolase (436 aa).

C99 serves as the catalytic Acyl-thioester intermediate. Catalysis depends on proton acceptor residues H392 and C422.

The protein belongs to the thiolase-like superfamily. Thiolase family. In terms of assembly, heterotetramer of two alpha chains (FadJ) and two beta chains (FadI).

The protein localises to the cytoplasm. The enzyme catalyses an acyl-CoA + acetyl-CoA = a 3-oxoacyl-CoA + CoA. It participates in lipid metabolism; fatty acid beta-oxidation. In terms of biological role, catalyzes the final step of fatty acid oxidation in which acetyl-CoA is released and the CoA ester of a fatty acid two carbons shorter is formed. The sequence is that of 3-ketoacyl-CoA thiolase from Shewanella sp. (strain ANA-3).